Here is a 190-residue protein sequence, read N- to C-terminus: dCTP deaminase (190 aa).

DCTP is bound at residue 113 to 118; the sequence is KSTYAR. E139 acts as the Proton donor/acceptor in catalysis. Positions 158, 172, 181, and 182 each coordinate dCTP.

This sequence belongs to the dCTP deaminase family. In terms of assembly, homotrimer.

The enzyme catalyses dCTP + H2O + H(+) = dUTP + NH4(+). It functions in the pathway pyrimidine metabolism; dUMP biosynthesis; dUMP from dCTP (dUTP route): step 1/2. In terms of biological role, catalyzes the deamination of dCTP to dUTP. This is dCTP deaminase from Chlamydia pneumoniae (Chlamydophila pneumoniae).